We begin with the raw amino-acid sequence, 130 residues long: Large ribosomal subunit protein eL34 (130 aa).

A disordered region spans residues 111–130 (KPVSKPPKIQKTAKAASKSK).

This sequence belongs to the eukaryotic ribosomal protein eL34 family.

In Aedes albopictus (Asian tiger mosquito), this protein is Large ribosomal subunit protein eL34 (RpL34).